A 275-amino-acid chain; its full sequence is uncharacterized protein (275 aa).

The HTH araC/xylS-type domain occupies 171-268 (KMVCEFLEEH…GLTPKQYMKI (98 aa)). 2 consecutive DNA-binding regions (H-T-H motif) follow at residues 188-209 (NDLSELTGWSKYHLLRSFTKQK) and 235-258 (PIDAAFQTGFSDQSHMTKFFKRQV).

This is an uncharacterized protein from Bacillus subtilis (strain 168).